Consider the following 156-residue polypeptide: Small ribosomal subunit protein uS7 (156 aa).

The protein belongs to the universal ribosomal protein uS7 family. Part of the 30S ribosomal subunit. Contacts proteins S9 and S11.

Functionally, one of the primary rRNA binding proteins, it binds directly to 16S rRNA where it nucleates assembly of the head domain of the 30S subunit. Is located at the subunit interface close to the decoding center, probably blocks exit of the E-site tRNA. In Streptococcus gordonii (strain Challis / ATCC 35105 / BCRC 15272 / CH1 / DL1 / V288), this protein is Small ribosomal subunit protein uS7.